The chain runs to 363 residues: D-proline dehydrogenase (363 aa).

An FAD-binding site is contributed by 3 to 17 (VAIVGGGIIGLFTAY).

It belongs to the DadA oxidoreductase family. In terms of assembly, homotetramer. Requires FAD as cofactor.

It is found in the cell membrane. The catalysed reaction is D-proline + A = 1-pyrroline-2-carboxylate + AH2. In terms of biological role, catalyzes the dehydrogenation of D-proline. Can also use other D-amino acids, but with lower efficiency. This chain is D-proline dehydrogenase (dpdh), found in Pyrobaculum islandicum (strain DSM 4184 / JCM 9189 / GEO3).